The primary structure comprises 103 residues: Histone H4 (103 aa).

Residues methionine 1 to glycine 14 show a composition bias toward gly residues. The segment at methionine 1 to arginine 20 is disordered. The DNA-binding element occupies lysine 17–lysine 21.

The protein belongs to the histone H4 family. The nucleosome is a histone octamer containing two molecules each of H2A, H2B, H3 and H4 assembled in one H3-H4 heterotetramer and two H2A-H2B heterodimers. The octamer wraps approximately 147 bp of DNA.

It localises to the nucleus. The protein localises to the chromosome. Its function is as follows. Core component of nucleosome. Nucleosomes wrap and compact DNA into chromatin, limiting DNA accessibility to the cellular machineries which require DNA as a template. Histones thereby play a central role in transcription regulation, DNA repair, DNA replication and chromosomal stability. DNA accessibility is regulated via a complex set of post-translational modifications of histones, also called histone code, and nucleosome remodeling. In Physarum polycephalum (Slime mold), this protein is Histone H4 (H41).